The following is a 314-amino-acid chain: tRNA pseudouridine synthase B (314 aa).

Histidine 43 contacts substrate. The Nucleophile role is filled by aspartate 48. The substrate site is built by tyrosine 76, tyrosine 179, and leucine 200.

It belongs to the pseudouridine synthase TruB family. Type 1 subfamily.

The enzyme catalyses uridine(55) in tRNA = pseudouridine(55) in tRNA. Its function is as follows. Responsible for synthesis of pseudouridine from uracil-55 in the psi GC loop of transfer RNAs. The chain is tRNA pseudouridine synthase B from Shigella flexneri.